We begin with the raw amino-acid sequence, 673 residues long: Gametogenetin (673 aa).

The disordered stretch occupies residues 1-599 (MGNVQSEPSA…TSTAGASNKG (599 aa)). Basic and acidic residues predominate over residues 14–30 (SRKEQASDRASDSRRTP). Low complexity predominate over residues 70–83 (ASSSPLPLTLELPS). An interaction with GGNBP1 region spans residues 125-506 (RGLLEASHRG…APTPPSTLSP (382 aa)). A compositionally biased stretch (pro residues) spans 161-178 (PAPPPTPLEPRKQLPPAP). Positions 192–202 (LASSATSPTES) are enriched in polar residues. Residues 257–268 (SASGPLAAKASP) show a composition bias toward low complexity. Ser-399 is subject to Phosphoserine. Residues 413 to 424 (PRRPTPALLAPP) are compositionally biased toward low complexity. Residues 438 to 475 (RPVPPSPQQIPPLPPPPPTPPATPPPAPPPTPQPPALP) are compositionally biased toward pro residues. Low complexity predominate over residues 504–531 (LSPTAAADQVPAATPATVTSQVPATATA). Residues 511–673 (DQVPAATPAT…HYDLQATHST (163 aa)) are interactions with ZNF403/GGNBP2 and OAZ3. The segment covering 542-551 (TRTRRNKGPR) has biased composition (basic residues).

In terms of assembly, isoform 1 and isoform 3 interact with FANCL. Isoform 1 interacts with GGNBP1, ZNF403/GGNBP2 and OAZ3. Isoform 2 interacts with GGNBP1. In terms of tissue distribution, testis-specific. Specifically expressed in the germ cells and not in the somatic, Sertoli, or Leydig cells. In adult testis, expression starts in stage VIII pachytene spermatocytes, increases in stage IX and X pachytene spermatocytes, and culminates in stage XI diplotene spermatocytes and the meiotic cells in stage XII. Expression decreases slightly in step 1-3 spermatids, further decreases in step 4-11 spermatids, and is no longer detectable in step 12 spermatids and beyond. Isoform 2 is mainly expressed in testis.

It is found in the cytoplasm. Its subcellular location is the perinuclear region. It localises to the cytoplasmic vesicle. The protein resides in the nucleus. The protein localises to the nucleolus. Functionally, may be involved in spermatogenesis. In Mus musculus (Mouse), this protein is Gametogenetin (Ggn).